Reading from the N-terminus, the 396-residue chain is Cytochrome c biogenesis protein Ccs1 (396 aa).

3 helical membrane-spanning segments follow: residues 22–42 (LKFS…GTII), 79–99 (SNFY…CSLK), and 162–182 (AGPL…AIHA).

It belongs to the Ccs1/CcsB family. May interact with CcsA.

The protein resides in the plastid. It localises to the chloroplast thylakoid membrane. Its function is as follows. Required during biogenesis of c-type cytochromes (cytochrome c6 and cytochrome f) at the step of heme attachment. This is Cytochrome c biogenesis protein Ccs1 from Cyanidium caldarium (Red alga).